The sequence spans 469 residues: Peripherin (469 aa).

2 stretches are compositionally biased toward low complexity: residues 1 to 18 (MSHPSGLRSSVSSTSYRR) and 27 to 53 (SPGAFSYSSSSRFSSSRLLGSASPGSS). Residues 1–60 (MSHPSGLRSSVSSTSYRRTFGPPPSLSPGAFSYSSSSRFSSSRLLGSASPGSSVRLGSFR) are disordered. Residues 1 to 98 (MSHPSGLRSS…FLATRSNEKQ (98 aa)) form a head region. Tyrosine 16 carries the 3'-nitrotyrosine modification. 3 positions are modified to phosphoserine: serine 27, serine 49, and serine 58. The IF rod domain maps to 96–406 (EKQELQELND…KLLEGEESRI (311 aa)). Residues 99–131 (ELQELNDRFANFIEKVRFLEQQNAALRGELNQA) form a coil 1A region. The interval 132 to 142 (RGQEPARADQL) is linker 1. Residues 143 to 238 (CQQELRELRR…KLHEEELRDL (96 aa)) form a coil 1B region. Positions 239–261 (QLSVESQQVQHVEVEATVKPELT) are linker 2. Positions 262–404 (AALRDIRAQY…YRKLLEGEES (143 aa)) are coil 2. Tyrosine 378 carries the 3'-nitrotyrosine modification. The tail stretch occupies residues 405–469 (RISVPVHSFA…SELDKSPQSY (65 aa)). A disordered region spans residues 447–469 (GEQVVTESQKEQHSELDKSPQSY). The residue at position 469 (tyrosine 469) is a Phosphotyrosine.

It belongs to the intermediate filament family. As to quaternary structure, forms homodimers (in vitro). Homopolymerizes into a filamentous network (in vitro). Forms heterodimers with NEFL, NEFM or NEFH (in vitro). Interacts with DST (via C-terminus). Interacts with RAB7A; the interaction is direct. Interacts with PRKCE (via phorbol-ester/DAG-type 2 domain). Post-translationally, phosphorylated; phosphorylation increases after nerve injury in regenerating neurons.

The protein localises to the cytoplasm. The protein resides in the cytoskeleton. It localises to the cell projection. It is found in the axon. Its subcellular location is the perikaryon. In terms of biological role, class-III neuronal intermediate filament protein. May form an independent structural network without the involvement of other neurofilaments or may cooperate with the neuronal intermediate filament proteins NEFL, NEFH, NEFM and INA to form a filamentous network. Assembly of the neuronal intermediate filaments may be regulated by RAB7A. Plays a role in the development of unmyelinated sensory neurons. May be involved in axon elongation and axon regeneration after injury. Inhibits neurite extension in type II spiral ganglion neurons in the cochlea. The sequence is that of Peripherin (PRPH) from Bos taurus (Bovine).